The primary structure comprises 5148 residues: E3 ubiquitin-protein ligase RNF213 (5148 aa).

The span at 38-48 shows a compositional bias: polar residues; sequence DNTLVVSSTPE. Residues 38–341 form a disordered region; the sequence is DNTLVVSSTP…QAAAPEPTSA (304 aa). Over residues 69-78 the composition is skewed to basic and acidic residues; that stretch reads PGKELEKPEE. The segment covering 101-113 has biased composition (polar residues); it reads GTISSSEAPSSGL. The span at 130 to 146 shows a compositional bias: low complexity; it reads PQNQAQQGGAASQPGHP. Residue Ser-196 is modified to Phosphoserine. Basic and acidic residues-rich tracts occupy residues 233 to 245, 257 to 267, and 279 to 289; these read SKGE…KKVP, AGKETGEDVRK, and KHGDQEAELKG. The segment covering 319–335 has biased composition (low complexity); that stretch reads AAAVKTQQAAAPQQAAA. A Glycyl lysine isopeptide (Lys-Gly) (interchain with G-Cter in SUMO2) cross-link involves residue Lys-1128. ATP-binding positions include 1957–1962, Glu-2060, Ala-2114, Asp-2116, and Arg-2177; that span reads GVGKSL. Ser-2234 is modified (phosphoserine). Lys-2460 and Ser-2535 together coordinate ATP. A coiled-coil region spans residues 3435–3465; that stretch reads EEMEIETSQSKELAEEQMEVEDSEEMKKASD. The Zn(2+) site is built by Cys-3947, Cys-3950, Cys-3962, His-3964, Cys-3967, Cys-3970, Cys-3982, Cys-3985, Cys-4451, and His-4455. The RING-type zinc finger occupies 3947–3986; it reads CFICHGDAQDPVCLPCDHVYCLRCIQTWLIPGQMMCPYCL. Residues 4429–4501 form an RZ-type zinc finger; it reads MPEDLLVHAR…IRNNEDRTQT (73 aa). Cys-4462 acts as the Nucleophile; for E3 ubiquitin-lipopolysaccharide ligase activity in catalysis. Zn(2+) contacts are provided by Cys-4471 and Cys-4474.

The protein belongs to the AAA ATPase family. Monomer. Interacts with UBE2L3/UBCH7; UBE2L3/UBCH7 is the most efficient ubiquitin-conjugating enzyme E2 for the ubiquitin ligase activity. Interacts with UBE2N/UBC13; promoting 'Lys-63'-linked ubiquitination of target proteins.

The protein resides in the cytoplasm. Its subcellular location is the cytosol. It localises to the lipid droplet. The enzyme catalyses S-ubiquitinyl-[E2 ubiquitin-conjugating enzyme]-L-cysteine + [acceptor protein]-L-lysine = [E2 ubiquitin-conjugating enzyme]-L-cysteine + N(6)-ubiquitinyl-[acceptor protein]-L-lysine.. It catalyses the reaction ATP + H2O = ADP + phosphate + H(+). It participates in protein modification; protein ubiquitination. Atypical E3 ubiquitin ligase that can catalyze ubiquitination of both proteins and lipids, and which is involved in various processes, such as lipid metabolism, angiogenesis and cell-autonomous immunity. Acts as a key immune sensor by catalyzing ubiquitination of the lipid A moiety of bacterial lipopolysaccharide (LPS) via its RZ-type zinc-finger: restricts the proliferation of cytosolic bacteria, such as Salmonella, by generating the bacterial ubiquitin coat through the ubiquitination of LPS. Also acts indirectly by mediating the recruitment of the LUBAC complex, which conjugates linear polyubiquitin chains. Ubiquitination of LPS triggers cell-autonomous immunity, such as antibacterial autophagy, leading to degradation of the microbial invader. Involved in lipid metabolism by regulating fat storage and lipid droplet formation; act by inhibiting the lipolytic process. Also regulates lipotoxicity by inhibiting desaturation of fatty acids. Also acts as an E3 ubiquitin-protein ligase via its RING-type zinc finger: mediates 'Lys-63'-linked ubiquitination of target proteins. Involved in the non-canonical Wnt signaling pathway in vascular development: acts by mediating ubiquitination and degradation of FLNA and NFATC2 downstream of RSPO3, leading to inhibit the non-canonical Wnt signaling pathway and promoting vessel regression. Also has ATPase activity; ATPase activity is required for ubiquitination of LPS. The chain is E3 ubiquitin-protein ligase RNF213 from Mus musculus (Mouse).